The chain runs to 244 residues: 1-(5-phosphoribosyl)-5-[(5-phosphoribosylamino)methylideneamino] imidazole-4-carboxamide isomerase (244 aa).

Residue D10 is the Proton acceptor of the active site. The active-site Proton donor is the D129.

This sequence belongs to the HisA/HisF family.

The protein resides in the cytoplasm. It carries out the reaction 1-(5-phospho-beta-D-ribosyl)-5-[(5-phospho-beta-D-ribosylamino)methylideneamino]imidazole-4-carboxamide = 5-[(5-phospho-1-deoxy-D-ribulos-1-ylimino)methylamino]-1-(5-phospho-beta-D-ribosyl)imidazole-4-carboxamide. The protein operates within amino-acid biosynthesis; L-histidine biosynthesis; L-histidine from 5-phospho-alpha-D-ribose 1-diphosphate: step 4/9. This is 1-(5-phosphoribosyl)-5-[(5-phosphoribosylamino)methylideneamino] imidazole-4-carboxamide isomerase from Rhodococcus jostii (strain RHA1).